The chain runs to 201 residues: Probable DNA replication complex GINS protein PSF1 (201 aa).

This sequence belongs to the GINS1/PSF1 family. As to quaternary structure, component of the GINS complex which is a heterotetramer of gins1, gins2, gins3 and gins4.

Its subcellular location is the nucleus. Its function is as follows. The GINS complex plays an essential role in the initiation of DNA replication. In Caenorhabditis briggsae, this protein is Probable DNA replication complex GINS protein PSF1.